The sequence spans 430 residues: Histidine--tRNA ligase (430 aa).

It belongs to the class-II aminoacyl-tRNA synthetase family. In terms of assembly, homodimer.

The protein resides in the cytoplasm. It catalyses the reaction tRNA(His) + L-histidine + ATP = L-histidyl-tRNA(His) + AMP + diphosphate + H(+). The chain is Histidine--tRNA ligase from Chlamydia abortus (strain DSM 27085 / S26/3) (Chlamydophila abortus).